We begin with the raw amino-acid sequence, 491 residues long: Glucose-6-phosphate 1-dehydrogenase (491 aa).

Residues arginine 51 and lysine 150 each contribute to the NADP(+) site. Histidine 180, lysine 184, glutamate 218, and aspartate 237 together coordinate substrate. Histidine 242 serves as the catalytic Proton acceptor. Position 341 (lysine 341) interacts with substrate.

The protein belongs to the glucose-6-phosphate dehydrogenase family.

The catalysed reaction is D-glucose 6-phosphate + NADP(+) = 6-phospho-D-glucono-1,5-lactone + NADPH + H(+). It functions in the pathway carbohydrate degradation; pentose phosphate pathway; D-ribulose 5-phosphate from D-glucose 6-phosphate (oxidative stage): step 1/3. Its function is as follows. Catalyzes the oxidation of glucose 6-phosphate to 6-phosphogluconolactone. This Rhizobium meliloti (strain 1021) (Ensifer meliloti) protein is Glucose-6-phosphate 1-dehydrogenase.